The chain runs to 410 residues: Segmentation protein fushi tarazu (410 aa).

3 disordered regions span residues 71–93 (TQTV…KAED), 138–157 (PAVS…QEYV), and 175–221 (SPQS…SAVS). Residues 76-85 (PVQPTTPPPK) show a composition bias toward pro residues. A compositionally biased stretch (pro residues) spans 190–199 (TPPPTTPTSL). Positions 254 to 313 (SKRTRQTYTRYQTLELEKEFHFNRYITRRRRIDIANALSLSERQIKIWFQNRRMKSKKDR) form a DNA-binding region, homeobox.

Belongs to the Antp homeobox family. In terms of processing, phosphorylated at as many as 16 sites. Expressed early in development in a striped pattern at the blastoderm stage. Later expressed in a specific subset of neuronal precursor cells, neurons and glia in the developing CNS. Between 5 and 6 hours of development, found in the midline precursor-2 cells in a segmentally repeating pattern. Expression in many other neuronal precursors follows and reaches a second peak of abundance at 9 hours of development. Expressed in the hindgut between 11-15 hours of development.

It is found in the nucleus. In terms of biological role, may play a role in determining neuronal identity, may be directly involved in specifying identity of individual neurons. Required during embryogenesis for the process of body segmentation. Homeotic protein, required in alternating segment primordia, it specifies the correct number of segments. The polypeptide is Segmentation protein fushi tarazu (ftz) (Drosophila melanogaster (Fruit fly)).